Here is a 407-residue protein sequence, read N- to C-terminus: Peptidase T (407 aa).

His-78 is a Zn(2+) binding site. Asp-80 is a catalytic residue. Residue Asp-139 participates in Zn(2+) binding. Glu-173 acts as the Proton acceptor in catalysis. The Zn(2+) site is built by Glu-174, Asp-196, and His-378.

This sequence belongs to the peptidase M20B family. Zn(2+) serves as cofactor.

The protein localises to the cytoplasm. The enzyme catalyses Release of the N-terminal residue from a tripeptide.. Cleaves the N-terminal amino acid of tripeptides. This is Peptidase T from Shewanella pealeana (strain ATCC 700345 / ANG-SQ1).